A 254-amino-acid chain; its full sequence is Large ribosomal subunit protein uL2B (254 aa).

Residue Lys46 forms a Glycyl lysine isopeptide (Lys-Gly) (interchain with G-Cter in ubiquitin) linkage. A Phosphoserine modification is found at Ser52. Lys93 is covalently cross-linked (Glycyl lysine isopeptide (Lys-Gly) (interchain with G-Cter in ubiquitin)). Ser95 is modified (phosphoserine). Residues Lys119 and Lys145 each participate in a glycyl lysine isopeptide (Lys-Gly) (interchain with G-Cter in ubiquitin) cross-link. A phosphoserine mark is found at Ser159, Ser160, and Ser249.

Belongs to the universal ribosomal protein uL2 family. Component of the large ribosomal subunit (LSU). Mature yeast ribosomes consist of a small (40S) and a large (60S) subunit. The 40S small subunit contains 1 molecule of ribosomal RNA (18S rRNA) and 33 different proteins (encoded by 57 genes). The large 60S subunit contains 3 rRNA molecules (25S, 5.8S and 5S rRNA) and 46 different proteins (encoded by 81 genes).

It localises to the cytoplasm. Component of the ribosome, a large ribonucleoprotein complex responsible for the synthesis of proteins in the cell. The small ribosomal subunit (SSU) binds messenger RNAs (mRNAs) and translates the encoded message by selecting cognate aminoacyl-transfer RNA (tRNA) molecules. The large subunit (LSU) contains the ribosomal catalytic site termed the peptidyl transferase center (PTC), which catalyzes the formation of peptide bonds, thereby polymerizing the amino acids delivered by tRNAs into a polypeptide chain. The nascent polypeptides leave the ribosome through a tunnel in the LSU and interact with protein factors that function in enzymatic processing, targeting, and the membrane insertion of nascent chains at the exit of the ribosomal tunnel. The protein is Large ribosomal subunit protein uL2B of Saccharomyces cerevisiae (strain ATCC 204508 / S288c) (Baker's yeast).